Here is a 282-residue protein sequence, read N- to C-terminus: High mobility group nucleosome-binding domain-containing protein 5 (282 aa).

The tract at residues 1–282 (MPKRKAAGQG…GKKEEPQSIV (282 aa)) is disordered. Threonine 31 carries the post-translational modification Phosphothreonine. The span at 37–46 (KRTSSSRKMK) shows a compositional bias: basic residues. Residue lysine 67 forms a Glycyl lysine isopeptide (Lys-Gly) (interchain with G-Cter in SUMO2) linkage. Tyrosine 76 carries the phosphotyrosine modification. Basic and acidic residues predominate over residues 81-119 (KNGEAKITEAPASEKEIVEVKEENIEDATEKGGEKKEAV). Serine 93 bears the Phosphoserine mark. A Glycyl lysine isopeptide (Lys-Gly) (interchain with G-Cter in SUMO1); alternate cross-link involves residue lysine 101. Lysine 101 is covalently cross-linked (Glycyl lysine isopeptide (Lys-Gly) (interchain with G-Cter in SUMO2); alternate). Residue lysine 124 forms a Glycyl lysine isopeptide (Lys-Gly) (interchain with G-Cter in SUMO2) linkage. Residues 125–138 (NEEEDQKEDEEDQN) are compositionally biased toward acidic residues. Basic and acidic residues-rich tracts occupy residues 139 to 152 (EEKG…KDEK) and 158 to 256 (KEDK…KEDL). Positions 257 to 270 (KEEEEGKEEDEIKE) are enriched in acidic residues. Basic and acidic residues predominate over residues 271 to 282 (DDGKKEEPQSIV).

This sequence belongs to the HMGN family. Ubiquitously expressed.

The protein localises to the nucleus. Functionally, preferentially binds to euchromatin and modulates cellular transcription by counteracting linker histone-mediated chromatin compaction. The sequence is that of High mobility group nucleosome-binding domain-containing protein 5 (HMGN5) from Homo sapiens (Human).